We begin with the raw amino-acid sequence, 142 residues long: Peptide methionine sulfoxide reductase MsrB (142 aa).

A MsrB domain is found at 3–126 (KEELKKKLSP…NSAALRFIPF (124 aa)). The Nucleophile role is filled by Cys115.

Belongs to the MsrB Met sulfoxide reductase family.

The enzyme catalyses L-methionyl-[protein] + [thioredoxin]-disulfide + H2O = L-methionyl-(R)-S-oxide-[protein] + [thioredoxin]-dithiol. The sequence is that of Peptide methionine sulfoxide reductase MsrB from Lactococcus lactis subsp. cremoris (strain MG1363).